We begin with the raw amino-acid sequence, 201 residues long: Dermatopontin (201 aa).

The N-terminal stretch at 1–18 is a signal peptide; that stretch reads MDLTLLWVLLPLVTVAWG. Gln-19 bears the Pyrrolidone carboxylic acid mark. Residue Tyr-23 is modified to Sulfotyrosine. Repeat copies occupy residues 26-79, 70-75, 80-135, and 125-130. The segment at 26–135 is 2 X 53-55 AA tandem repeats; the sequence is SYHQYHDYSD…REWQFYCCRY (110 aa). 5 cysteine pairs are disulfide-bonded: Cys-50–Cys-77, Cys-90–Cys-132, Cys-106–Cys-133, Cys-139–Cys-196, and Cys-143–Cys-189. The 3 X 6 AA tandem repeats of D-R-[EQ]-W-[NQK]-[FY] stretch occupies residues 70 to 186; that stretch reads DRQWNYACMP…AVERDRQWKF (117 aa). Tyr-162, Tyr-164, Tyr-166, and Tyr-167 each carry sulfotyrosine. The stretch at 181-186 is one 2-3 repeat; the sequence is DRQWKF. Tyr-194 bears the Sulfotyrosine mark.

This sequence belongs to the dermatopontin family. Interacts with TGFB1, DCN and collagen. Post-translationally, sulfated on tyrosine residue(s). Expressed in skeletal muscle, heart, pancreas, skin and cultured fibroblasts.

Its subcellular location is the secreted. The protein resides in the extracellular space. The protein localises to the extracellular matrix. In terms of biological role, seems to mediate adhesion by cell surface integrin binding. May serve as a communication link between the dermal fibroblast cell surface and its extracellular matrix environment. Enhances TGFB1 activity. Inhibits cell proliferation. Accelerates collagen fibril formation, and stabilizes collagen fibrils against low-temperature dissociation. The polypeptide is Dermatopontin (DPT) (Bos taurus (Bovine)).